The following is a 316-amino-acid chain: Lipoyl synthase (316 aa).

7 residues coordinate [4Fe-4S] cluster: C61, C66, C72, C87, C91, C94, and S301. The Radical SAM core domain occupies 73 to 290 (FGKGTATFMI…ERAAIEMGFS (218 aa)).

This sequence belongs to the radical SAM superfamily. Lipoyl synthase family. The cofactor is [4Fe-4S] cluster.

The protein localises to the cytoplasm. The enzyme catalyses [[Fe-S] cluster scaffold protein carrying a second [4Fe-4S](2+) cluster] + N(6)-octanoyl-L-lysyl-[protein] + 2 oxidized [2Fe-2S]-[ferredoxin] + 2 S-adenosyl-L-methionine + 4 H(+) = [[Fe-S] cluster scaffold protein] + N(6)-[(R)-dihydrolipoyl]-L-lysyl-[protein] + 4 Fe(3+) + 2 hydrogen sulfide + 2 5'-deoxyadenosine + 2 L-methionine + 2 reduced [2Fe-2S]-[ferredoxin]. Its pathway is protein modification; protein lipoylation via endogenous pathway; protein N(6)-(lipoyl)lysine from octanoyl-[acyl-carrier-protein]: step 2/2. Functionally, catalyzes the radical-mediated insertion of two sulfur atoms into the C-6 and C-8 positions of the octanoyl moiety bound to the lipoyl domains of lipoate-dependent enzymes, thereby converting the octanoylated domains into lipoylated derivatives. The polypeptide is Lipoyl synthase (Nitrosospira multiformis (strain ATCC 25196 / NCIMB 11849 / C 71)).